The following is a 147-amino-acid chain: Prefoldin subunit alpha (147 aa).

Belongs to the prefoldin subunit alpha family. Heterohexamer of two alpha and four beta subunits.

The protein resides in the cytoplasm. Molecular chaperone capable of stabilizing a range of proteins. Seems to fulfill an ATP-independent, HSP70-like function in archaeal de novo protein folding. The sequence is that of Prefoldin subunit alpha (pfdA) from Saccharolobus solfataricus (strain ATCC 35092 / DSM 1617 / JCM 11322 / P2) (Sulfolobus solfataricus).